A 159-amino-acid chain; its full sequence is Ribosomal RNA large subunit methyltransferase H (159 aa).

S-adenosyl-L-methionine contacts are provided by residues L76, G108, and 127–132 (FSKMTF).

It belongs to the RNA methyltransferase RlmH family. In terms of assembly, homodimer.

It localises to the cytoplasm. The catalysed reaction is pseudouridine(1915) in 23S rRNA + S-adenosyl-L-methionine = N(3)-methylpseudouridine(1915) in 23S rRNA + S-adenosyl-L-homocysteine + H(+). In terms of biological role, specifically methylates the pseudouridine at position 1915 (m3Psi1915) in 23S rRNA. In Staphylococcus aureus (strain Mu3 / ATCC 700698), this protein is Ribosomal RNA large subunit methyltransferase H.